Consider the following 211-residue polypeptide: Protein GrpE (211 aa).

Basic and acidic residues predominate over residues 1–13; sequence MVDKDEEQIKQNV. Positions 1–38 are disordered; the sequence is MVDKDEEQIKQNVEEDLSSTVEQTGEENIEFPSAPNHP.

It belongs to the GrpE family. Homodimer.

Its subcellular location is the cytoplasm. Functionally, participates actively in the response to hyperosmotic and heat shock by preventing the aggregation of stress-denatured proteins, in association with DnaK and GrpE. It is the nucleotide exchange factor for DnaK and may function as a thermosensor. Unfolded proteins bind initially to DnaJ; upon interaction with the DnaJ-bound protein, DnaK hydrolyzes its bound ATP, resulting in the formation of a stable complex. GrpE releases ADP from DnaK; ATP binding to DnaK triggers the release of the substrate protein, thus completing the reaction cycle. Several rounds of ATP-dependent interactions between DnaJ, DnaK and GrpE are required for fully efficient folding. The sequence is that of Protein GrpE from Protochlamydia amoebophila (strain UWE25).